An 847-amino-acid chain; its full sequence is Histidine decarboxylase (847 aa).

Substrate-binding residues include F80 and H193. K304 is subject to N6-(pyridoxal phosphate)lysine. The span at 575 to 605 shows a compositional bias: polar residues; it reads GNGATRTSTTNSYGHTTSAAQANSERQASIQ. Disordered stretches follow at residues 575–662, 769–798, and 813–847; these read GNGA…RSSP, QSQS…MSSL, and SQPM…MESL. Over residues 606–616 the composition is skewed to acidic residues; that stretch reads EDNEESPEETE. Composition is skewed to low complexity over residues 634-657 and 769-787; these read SLST…TQSS and QSQS…LSGG. Positions 832 to 847 are enriched in polar residues; it reads DSDATVCSTTSSMESL.

Belongs to the group II decarboxylase family. Homodimer. Pyridoxal 5'-phosphate is required as a cofactor. In terms of tissue distribution, localized primarily to the photoreceptors, in the eye.

The catalysed reaction is L-histidine + H(+) = histamine + CO2. Its function is as follows. Required in photoreceptor transmitter synthesis. Catlayzes the conversion of L-histidine to histamine. The sequence is that of Histidine decarboxylase (Hdc) from Drosophila melanogaster (Fruit fly).